Consider the following 104-residue polypeptide: N(4)-acetylcytidine amidohydrolase (104 aa).

One can recognise an ASCH domain in the interval 7 to 93 (MTFFSRFEAD…EVIQEIYPGI (87 aa)). The Proton acceptor role is filled by Lys-22. Thr-25 functions as the Nucleophile in the catalytic mechanism. Glu-75 serves as the catalytic Proton donor.

This sequence belongs to the N(4)-acetylcytidine amidohydrolase family.

The catalysed reaction is N(4)-acetylcytidine + H2O = cytidine + acetate + H(+). It catalyses the reaction N(4)-acetyl-2'-deoxycytidine + H2O = 2'-deoxycytidine + acetate + H(+). The enzyme catalyses N(4)-acetylcytosine + H2O = cytosine + acetate + H(+). In terms of biological role, catalyzes the hydrolysis of N(4)-acetylcytidine (ac4C). The protein is N(4)-acetylcytidine amidohydrolase of Vibrio vulnificus (strain YJ016).